The primary structure comprises 427 residues: O-methyltransferase PaMT (427 aa).

S-adenosyl-L-methionine contacts are provided by Trp-230 and Asp-281. The active-site Proton acceptor is the His-326.

It belongs to the class I-like SAM-binding methyltransferase superfamily. Cation-independent O-methyltransferase family. COMT subfamily. S-adenosyl-L-methionine serves as cofactor.

Its pathway is mycotoxin biosynthesis. In terms of biological role, O-methyltransferase; part of the 2 gene clusters that mediate the biosynthesis of fusicoccins, diterpene glucosides that display phytohormone-like activity and function as potent activators of plasma membrane H(+)-ATPases in plants by modifying 14-3-3 proteins and cause the plant disease constriction canker. The first step in the pathway is performed by the fusicoccadiene synthase PaFS that possesses both prenyl transferase and terpene cyclase activity, converting isopentenyl diphosphate and dimethylallyl diphosphate into geranylgeranyl diphosphate (GGDP) and successively converting GGDP into fusicocca-2,10(14)-diene, a precursor for fusicoccin H. The second step is the oxidation at the C-8 position by the cytochrome P450 monooxygenase PaP450-2 to yield fusicocca-2,10(14)-diene-8-beta-ol. The cytochrome P450 monooxygenase PaP450-1 then catalyzes the hydroxylation at the C-16 position to produce fusicocca-2,10(14)-diene-8-beta,16-diol. The dioxygenase fc-dox then catalyzes the 16-oxydation of fusicocca-2,10(14)-diene-8-beta,16-diol to yield an aldehyde (8-beta-hydroxyfusicocca-1,10(14)-dien-16-al). The short-chain dehydrogenase/reductase fc-sdr catalyzes the reduction of the aldehyde to yield fusicocca-1,10(14)-diene-8-beta,16-diol. The next step is the hydroxylation at C-9 performed by the cytochrome P450 monooxygenase PaP450-3 that leads to fusicoccin H aglycon which is glycosylated to fusicoccin H by the O-glycosyltransferase PaGT. Hydroxylation at C-12 by the cytochrome P450 monooxygenase PaP450-4 leads then to the production of fusicoccin Q and is followed by methylation by the O-methyltransferase PaMT to yield fusicoccin P. Fusicoccin P is further converted to fusicoccin J via prenylation by the O-glucose prenyltransferase PaPT. Cytochrome P450 monooxygenase PaP450-5 then performs hydroxylation at C-19 to yield dideacetyl-fusicoccin A which is acetylated to 3'-O-deacetyl-fusicoccin A by the O-acetyltransferase PaAT-2. Finally, a another acetylation by the O-acetyltransferase PaAT-1 yields fusicoccin A. This is O-methyltransferase PaMT from Phomopsis amygdali (Fusicoccum amygdali).